The following is a 221-amino-acid chain: Thiamine-phosphate synthase (221 aa).

4-amino-2-methyl-5-(diphosphooxymethyl)pyrimidine is bound by residues 46-50 and Asn-82; that span reads QFREK. Positions 83 and 102 each coordinate Mg(2+). Residue Ser-121 participates in 4-amino-2-methyl-5-(diphosphooxymethyl)pyrimidine binding. Residue 148–150 participates in 2-[(2R,5Z)-2-carboxy-4-methylthiazol-5(2H)-ylidene]ethyl phosphate binding; the sequence is TQS. Residue Lys-151 coordinates 4-amino-2-methyl-5-(diphosphooxymethyl)pyrimidine. 2-[(2R,5Z)-2-carboxy-4-methylthiazol-5(2H)-ylidene]ethyl phosphate is bound by residues Gly-180 and 200–201; that span reads IS.

The protein belongs to the thiamine-phosphate synthase family. Requires Mg(2+) as cofactor.

It catalyses the reaction 2-[(2R,5Z)-2-carboxy-4-methylthiazol-5(2H)-ylidene]ethyl phosphate + 4-amino-2-methyl-5-(diphosphooxymethyl)pyrimidine + 2 H(+) = thiamine phosphate + CO2 + diphosphate. The catalysed reaction is 2-(2-carboxy-4-methylthiazol-5-yl)ethyl phosphate + 4-amino-2-methyl-5-(diphosphooxymethyl)pyrimidine + 2 H(+) = thiamine phosphate + CO2 + diphosphate. The enzyme catalyses 4-methyl-5-(2-phosphooxyethyl)-thiazole + 4-amino-2-methyl-5-(diphosphooxymethyl)pyrimidine + H(+) = thiamine phosphate + diphosphate. It functions in the pathway cofactor biosynthesis; thiamine diphosphate biosynthesis; thiamine phosphate from 4-amino-2-methyl-5-diphosphomethylpyrimidine and 4-methyl-5-(2-phosphoethyl)-thiazole: step 1/1. Its function is as follows. Condenses 4-methyl-5-(beta-hydroxyethyl)thiazole monophosphate (THZ-P) and 2-methyl-4-amino-5-hydroxymethyl pyrimidine pyrophosphate (HMP-PP) to form thiamine monophosphate (TMP). This chain is Thiamine-phosphate synthase, found in Pasteurella multocida (strain Pm70).